The sequence spans 192 residues: MSNTIKMVVGLGNPGKEYEQTRHNAGFWFLDELAWKWKASFKEEKKFFGEVARAALPDGDVWLLKPATFMNRSGQAIAALAQFYKIKPEEILVVHDELDIPCGRIKFKLGGGNGGHNGLKDIQAKLGTADYYRLRLGIDHPGDRNLVVGYVLNKPSTEHRRQIDDAVAKSLQAIPDILAGKWEEATRFLHSK.

Tyr18 is a tRNA binding site. His23 acts as the Proton acceptor in catalysis. TRNA is bound by residues Phe69, Asn71, and Asn117.

It belongs to the PTH family. Monomer.

The protein resides in the cytoplasm. The enzyme catalyses an N-acyl-L-alpha-aminoacyl-tRNA + H2O = an N-acyl-L-amino acid + a tRNA + H(+). In terms of biological role, hydrolyzes ribosome-free peptidyl-tRNAs (with 1 or more amino acids incorporated), which drop off the ribosome during protein synthesis, or as a result of ribosome stalling. Its function is as follows. Catalyzes the release of premature peptidyl moieties from peptidyl-tRNA molecules trapped in stalled 50S ribosomal subunits, and thus maintains levels of free tRNAs and 50S ribosomes. The protein is Peptidyl-tRNA hydrolase of Neisseria meningitidis serogroup C (strain 053442).